Here is a 412-residue protein sequence, read N- to C-terminus: MDYKTYDPDLWNAIAREEERQENNLELIASENVVSKAVMAAQGSILTNKYAEGYPGKRYYGGCEFIDIVENLAIDRAKELFGAKFANVQAHSGSQANTAAYLSLVEPGDTILGMDLSAGGHLTHGSPVNFSGKTYNFVSYGVDPSTEVIDYDVVRILAREHRPKLIVAGASAYSRTIDFKRFREIADEVDAKLMVDMAHIAGLVASGLHPNPVPYADIVTSTTHKTLRGPRGGLILTNSEELAKKVNSSIFPGIQGGPLEHVIAGKAAAFKEALDPSFAEYSQQVIANAQAMTKVFNQAPEARLISGATDNHLLLIEVTGFGLNGKEAEAILDSVNITVNKNSIPFEQLSPFKTSGIRIGTPAITSRGFKEEDAVEVAKLIVQVLKDPENTAVHDEVKAAVAALTKKYPLYN.

(6S)-5,6,7,8-tetrahydrofolate contacts are provided by residues Leu116 and 120–122 (GHL). N6-(pyridoxal phosphate)lysine is present on Lys225. (6S)-5,6,7,8-tetrahydrofolate-binding positions include Glu241 and 350 to 352 (SPF).

It belongs to the SHMT family. In terms of assembly, homodimer. The cofactor is pyridoxal 5'-phosphate.

The protein localises to the cytoplasm. It carries out the reaction (6R)-5,10-methylene-5,6,7,8-tetrahydrofolate + glycine + H2O = (6S)-5,6,7,8-tetrahydrofolate + L-serine. It functions in the pathway one-carbon metabolism; tetrahydrofolate interconversion. Its pathway is amino-acid biosynthesis; glycine biosynthesis; glycine from L-serine: step 1/1. Its function is as follows. Catalyzes the reversible interconversion of serine and glycine with tetrahydrofolate (THF) serving as the one-carbon carrier. This reaction serves as the major source of one-carbon groups required for the biosynthesis of purines, thymidylate, methionine, and other important biomolecules. Also exhibits THF-independent aldolase activity toward beta-hydroxyamino acids, producing glycine and aldehydes, via a retro-aldol mechanism. The polypeptide is Serine hydroxymethyltransferase (Enterococcus faecalis (strain ATCC 700802 / V583)).